Consider the following 1669-residue polypeptide: Dystrophin, isoform B (1669 aa).

Residues 1–11 are compositionally biased toward pro residues; the sequence is MTAKPPPPIPP. Disordered stretches follow at residues 1 to 28, 43 to 243, 327 to 356, 389 to 417, and 481 to 508; these read MTAK…LAPE, RGQQ…SEDA, RAQA…RSTI, GGGG…MPLS, and SGAL…NSSG. Residues 53-62 show a composition bias toward polar residues; sequence SQEQHATNTL. Over residues 118 to 131 the composition is skewed to pro residues; that stretch reads GLPPTMRQPPPLPR. The span at 132 to 147 shows a compositional bias: low complexity; it reads KPASTQSSAQNSAQSS. Residues 153–166 show a composition bias toward basic and acidic residues; it reads KFKDKPPPPPEKHS. Low complexity-rich tracts occupy residues 328–347 and 396–405; these read AQAQ…SNSQ and STGNAVANSG. Residues 485 to 500 are compositionally biased toward basic and acidic residues; that stretch reads SREELRMRRRSSHDET. 4 Spectrin repeats span residues 541–643, 650–747, 754–883, and 890–990; these read QRFE…KQLH, QSFD…NRLE, NALL…HRLD, and RQFQ…KVLC. Residues 827-851 form a disordered region; the sequence is VSDTSDTEANHDSDSRYMSAEEQSR. Residues 994-1024 form a disordered region; sequence AQQTHENGDDGRTTSNSGTIGPLPNLGQSVK. In terms of domain architecture, WW spans 1021-1054; the sequence is QSVKPPWERATTAANVPYYIDHERETTHWDHPEM. The ZZ-type zinc-finger motif lies at 1279-1335; that stretch reads KHQAKCNICKEYPIVGFRYRCLKCFNFDMCQKCFFFGRNAKNHKLTHPMHEYCTTTT. Residues C1284, C1287, C1299, C1302, C1308, C1311, H1321, and H1325 each contribute to the Zn(2+) site. Phosphoserine is present on S1379. Disordered regions lie at residues 1488-1516 and 1559-1669; these read EQSG…GEQG and DEPN…ELQK. 2 stretches are compositionally biased toward polar residues: residues 1497–1509 and 1580–1611; these read NGMQ…MTGL and ALNS…QQNG. Over residues 1630–1641 the composition is skewed to acidic residues; it reads QELESINDDLED. Over residues 1642 to 1660 the composition is skewed to low complexity; the sequence is SSSSNTTNTTTTTTTTATT.

Component of the dystrophin associated protein complex (DAPC). Interacts with Dg, via the Dg WW domain binding sites. As to expression, expressed in neuronally derived tissues, mainly the CNS and the brain of stage 16 embryos. Lower level expression is seen in the sensory organs. Expression is absent from the musculature. In larvae, expression is predominant throughout the neuropil and brain and in the eye antennal disks.

The protein localises to the cell membrane. Its subcellular location is the sarcolemma. It localises to the cytoplasm. The protein resides in the cytoskeleton. Functionally, required for the maintenance of appropriate synaptic retrograde communication and the stabilization of muscle cell architecture or physiology. May play a role in anchoring the cytoskeleton to the plasma membrane. The polypeptide is Dystrophin, isoform B (Dys) (Drosophila melanogaster (Fruit fly)).